An 851-amino-acid chain; its full sequence is Putative serine/threonine-protein kinase 019R (851 aa).

Disordered regions lie at residues 1 to 24, 61 to 91, 104 to 160, 190 to 216, and 340 to 400; these read MATNYCDEFERNPTRNPRTGRTIK, PRVAAASPCPEFARDPTRNPRTGRPIKRGGP, GGAS…KRGG, GLSPFRSHMRKSPARRSPARRSPARRS, and SRPS…GEPR. The span at 125–141 shows a compositional bias: low complexity; it reads ARRQSPAEAAEASPCPE. The span at 196 to 216 shows a compositional bias: basic residues; it reads SHMRKSPARRSPARRSPARRS. Positions 340 to 366 are enriched in low complexity; sequence SRPSGVSRTSGTSGSSGSSASSRPPNS. A Protein kinase domain is found at 456 to 851; sequence AVSDNVIGQG…GEREIESFTM (396 aa). ATP contacts are provided by residues 462–470 and Lys485; that span reads IGQGSWGSV. The active-site Proton acceptor is Asp608.

The protein belongs to the protein kinase superfamily. Ser/Thr protein kinase family.

The catalysed reaction is L-seryl-[protein] + ATP = O-phospho-L-seryl-[protein] + ADP + H(+). It carries out the reaction L-threonyl-[protein] + ATP = O-phospho-L-threonyl-[protein] + ADP + H(+). This chain is Putative serine/threonine-protein kinase 019R, found in Dryophytes versicolor (chameleon treefrog).